The chain runs to 431 residues: Glutamate-1-semialdehyde 2,1-aminomutase (431 aa).

Lys-269 is modified (N6-(pyridoxal phosphate)lysine).

This sequence belongs to the class-III pyridoxal-phosphate-dependent aminotransferase family. HemL subfamily. Homodimer. Requires pyridoxal 5'-phosphate as cofactor.

The protein resides in the cytoplasm. The enzyme catalyses (S)-4-amino-5-oxopentanoate = 5-aminolevulinate. Its pathway is porphyrin-containing compound metabolism; protoporphyrin-IX biosynthesis; 5-aminolevulinate from L-glutamyl-tRNA(Glu): step 2/2. It participates in porphyrin-containing compound metabolism; chlorophyll biosynthesis. The chain is Glutamate-1-semialdehyde 2,1-aminomutase from Chlorobium phaeovibrioides (strain DSM 265 / 1930) (Prosthecochloris vibrioformis (strain DSM 265)).